Consider the following 335-residue polypeptide: Probable E3 ubiquitin-protein ligase BAH1-like (335 aa).

Positions 1-163 (MKFGETFTEY…SSENGKNFKL (163 aa)) constitute an SPX domain. Residues 231–280 (CAICLETVFNPYALKCGHIFCNSCACSAASVLIFQGIKAAPRHSKCPICR) form an RING-type zinc finger.

This sequence belongs to the RING-type zinc finger family.

It carries out the reaction S-ubiquitinyl-[E2 ubiquitin-conjugating enzyme]-L-cysteine + [acceptor protein]-L-lysine = [E2 ubiquitin-conjugating enzyme]-L-cysteine + N(6)-ubiquitinyl-[acceptor protein]-L-lysine.. Its pathway is protein modification; protein ubiquitination. This chain is Probable E3 ubiquitin-protein ligase BAH1-like (RF178), found in Arabidopsis thaliana (Mouse-ear cress).